A 446-amino-acid polypeptide reads, in one-letter code: MIMAKPLSSRRAAPLAGSAPVPGDKSISHRALMLGALAVGESVVTGLLEGDDVLRTAACMRALGAEVERRDDGSWRLFGRGVGGLMEPADVLDMGNSGTGARLLMGLVATHPFTCFFTGDGSLRSRPMRRVIDPLSRMGARFVSRDGGRLPLAVTGTAQPTPITYELPVASAQVKSAIMLAGLNTAGETTVIEREATRDHTELMLRNFGATVRVEDAEGGGRAITVVGFPELTGRPVVVPADPSSAAFPVVAALLVEGSEIRLPNVGTNPLRTGLYQTLLEMGADIRFDHPRDQAGEPVADLVVRSSRLKGVDVPAERAPSMIDEYPILAVAAAFAEGTTRMRGLGELRVKESDRLAAMARGLAACGVAVEEEKDALIVHGTGRIPDGDATVTTHFDHRIAMSFLVMGMASARPVAVDDSEAIDTSFPAFVELMNGLGAKISGDNP.

A disordered region spans residues 1–20 (MIMAKPLSSRRAAPLAGSAP). 3-phosphoshikimate-binding residues include K25, S26, and R30. K25 provides a ligand contact to phosphoenolpyruvate. Positions 98 and 126 each coordinate phosphoenolpyruvate. The 3-phosphoshikimate site is built by S171, Q173, D324, and K351. Q173 is a binding site for phosphoenolpyruvate. Catalysis depends on D324, which acts as the Proton acceptor. The phosphoenolpyruvate site is built by R355 and R399.

The protein belongs to the EPSP synthase family. Monomer.

It localises to the cytoplasm. It carries out the reaction 3-phosphoshikimate + phosphoenolpyruvate = 5-O-(1-carboxyvinyl)-3-phosphoshikimate + phosphate. It participates in metabolic intermediate biosynthesis; chorismate biosynthesis; chorismate from D-erythrose 4-phosphate and phosphoenolpyruvate: step 6/7. Its function is as follows. Catalyzes the transfer of the enolpyruvyl moiety of phosphoenolpyruvate (PEP) to the 5-hydroxyl of shikimate-3-phosphate (S3P) to produce enolpyruvyl shikimate-3-phosphate and inorganic phosphate. This chain is 3-phosphoshikimate 1-carboxyvinyltransferase, found in Paramagnetospirillum magneticum (strain ATCC 700264 / AMB-1) (Magnetospirillum magneticum).